Here is a 281-residue protein sequence, read N- to C-terminus: DegV domain-containing protein spr0652 (281 aa).

The region spanning 3 to 280 (WKIIADSGCD…EGGLLMGYEI (278 aa)) is the DegV domain. Residues serine 63 and serine 91 each coordinate hexadecanoate.

Its function is as follows. May bind long-chain fatty acids, such as palmitate, and may play a role in lipid transport or fatty acid metabolism. The protein is DegV domain-containing protein spr0652 of Streptococcus pneumoniae (strain ATCC BAA-255 / R6).